Here is a 90-residue protein sequence, read N- to C-terminus: Leech factor Xa inhibitor (90 aa).

The protein resides in the secreted. In terms of biological role, potent anticoagulant inhibiting the amidolytic activity of factor Xa (F10) (Ki=4nM) and reducing its ability to activate prothrombin (F2) in the prothrombinase complex (EC(50)=40nM). This is Leech factor Xa inhibitor from Haementeria depressa (Leech).